The chain runs to 225 residues: Phosphatidylserine decarboxylase proenzyme (225 aa).

The active-site Schiff-base intermediate with substrate; via pyruvic acid is the Ser-189. Ser-189 carries the pyruvic acid (Ser); by autocatalysis modification.

This sequence belongs to the phosphatidylserine decarboxylase family. PSD-A subfamily. As to quaternary structure, heterodimer of a large membrane-associated beta subunit and a small pyruvoyl-containing alpha subunit. It depends on pyruvate as a cofactor. Post-translationally, is synthesized initially as an inactive proenzyme. Formation of the active enzyme involves a self-maturation process in which the active site pyruvoyl group is generated from an internal serine residue via an autocatalytic post-translational modification. Two non-identical subunits are generated from the proenzyme in this reaction, and the pyruvate is formed at the N-terminus of the alpha chain, which is derived from the carboxyl end of the proenzyme. The post-translation cleavage follows an unusual pathway, termed non-hydrolytic serinolysis, in which the side chain hydroxyl group of the serine supplies its oxygen atom to form the C-terminus of the beta chain, while the remainder of the serine residue undergoes an oxidative deamination to produce ammonia and the pyruvoyl prosthetic group on the alpha chain.

The protein resides in the cell membrane. It catalyses the reaction a 1,2-diacyl-sn-glycero-3-phospho-L-serine + H(+) = a 1,2-diacyl-sn-glycero-3-phosphoethanolamine + CO2. It functions in the pathway phospholipid metabolism; phosphatidylethanolamine biosynthesis; phosphatidylethanolamine from CDP-diacylglycerol: step 2/2. Its function is as follows. Catalyzes the formation of phosphatidylethanolamine (PtdEtn) from phosphatidylserine (PtdSer). The chain is Phosphatidylserine decarboxylase proenzyme from Amoebophilus asiaticus (strain 5a2).